The sequence spans 742 residues: Alginate lyase (742 aa).

An N-terminal signal peptide occupies residues 1-26 (MRLQPLFVSLALAAPCALLPTASLSA). Substrate is bound by residues R143, 153–156 (QVLN), Q204, H208, and 263–266 (YYQR). Catalysis depends on Y264, which acts as the Proton donor. H418 functions as the Proton acceptor in the catalytic mechanism. Residues H420 and D438 each contribute to the Zn(2+) site. R443 serves as a coordination point for substrate. H469 contributes to the Zn(2+) binding site. E669 contributes to the substrate binding site.

The protein belongs to the polysaccharide lyase 17 family. Homodimer. It depends on Zn(2+) as a cofactor.

The protein resides in the periplasm. It catalyses the reaction Cleavage of 4-deoxy-alpha-L-erythro-hex-4-enopyranuronoside oligosaccharides into 4-deoxy-alpha-L-erythro-hex-4-enopyranuronate monosaccharides.. In terms of biological role, polysaccharide lyase that catalyzes the depolymerization of alginate via a beta-elimination mechanism, cleaving the beta-1,4 glycosidic bond between two adjacent sugar residues. Acts specifically on alginate and each of its block structures, with highest activity toward poly-beta-D-mannuronate (poly-ManA). Shows an exolytic mode of action, producing unsaturated monomers. Displays a very low activity against poly-beta-D-glucuronate (poly-GlcA), and is not active on poly-alpha-D-galacturonate, hyaluronan, heparin, heparan sulfate and chondroitin sulfate. The sequence is that of Alginate lyase from Stenotrophomonas maltophilia (strain K279a).